Reading from the N-terminus, the 254-residue chain is Anti-sigma-M factor RsmA (254 aa).

Over 1–112 (MSAADKDPDK…AARPHVHPVR (112 aa)) the chain is Cytoplasmic. A helical membrane pass occupies residues 113-133 (MIAGAAGLCAVATAIGVGAVV). Over 134–254 (DAPPPAPSAP…LLASTVVPRA (121 aa)) the chain is Extracellular.

In terms of assembly, interacts with ECF RNA polymerase sigma factor SigM; this should inhibit the interaction of SigM with the RNA polymerase catalytic core. Probably cleaved within the membrane by Rip1 near the cytoplasmic membrane interface.

The protein localises to the cell membrane. An anti-sigma factor for extracytoplasmic function (ECF) sigma factor SigM. ECF sigma factors are held in an inactive form by an anti-sigma factor until released by regulated intramembrane proteolysis (RIP). RIP occurs when an extracytoplasmic signal triggers a concerted proteolytic cascade to transmit information and elicit cellular responses. The membrane-spanning regulatory substrate protein is first cut extracytoplasmically (site-1 protease, S1P), then within the membrane itself (site-2 protease, S2P, Rip1), while cytoplasmic proteases finish degrading the regulatory protein, liberating the sigma factor. The sequence is that of Anti-sigma-M factor RsmA (rsmA) from Mycobacterium tuberculosis (strain ATCC 35801 / TMC 107 / Erdman).